A 455-amino-acid polypeptide reads, in one-letter code: MNKITTRSPLEPEYQPLGKPHHALQACVDFEQALLHNNKGNCHPKEESLKPVRPHDLGKKEGQKGDGLRAHAPLAATSQPGRKEVGLKPQHNHQNNHDFNLSPLAEGATNRAHLYQQDSRFDDRVESIINALMPLAPFLEGVTCETGTSSESPCEPSGHDELFVQQSPIDSAQPVQLNTKPTVQPLNPAADGAEVIVWSVGRETPASIAKNQRDSRQKRLAEEPLALHQKALPEICPPAVSATPDDHLVARWCATPVTEVAEKSARFPYKATVQSEQLDMTELADRSQHLTDGVDSSKDTIEPPRPEELLLPREETLPEMYSLSFTAPVVTPGDHLLATMRATRLASVSEQLIQLAQRLAVELELRGGSSQVTQLHLNLPELGAIMVRIAEIPGKLHVELIASREALRILAQGSYDLLERLQRIEPTQLDFQASDDSEQESRQKRHVYEEWEAEE.

Disordered stretches follow at residues 38–82 (NKGN…QPGR) and 430–455 (DFQA…EAEE). Composition is skewed to basic and acidic residues over residues 43–69 (HPKE…DGLR) and 439–449 (QESRQKRHVYE).

Belongs to the SpaN family.

The protein localises to the cytoplasm. In terms of biological role, component of the yop secretion machinery. The protein is Yop proteins translocation protein P (yscP) of Yersinia pseudotuberculosis serotype I (strain IP32953).